A 72-amino-acid polypeptide reads, in one-letter code: UPF0270 protein KPK_0377 (72 aa).

This sequence belongs to the UPF0270 family.

In Klebsiella pneumoniae (strain 342), this protein is UPF0270 protein KPK_0377.